A 197-amino-acid polypeptide reads, in one-letter code: Nucleoid occlusion factor SlmA (197 aa).

Positions Ile-7–Ile-67 constitute an HTH tetR-type domain. The H-T-H motif DNA-binding region spans Thr-30 to Phe-49. Positions Ala-110 to Glu-130 form a coiled coil.

This sequence belongs to the nucleoid occlusion factor SlmA family. Homodimer. Interacts with FtsZ.

The protein localises to the cytoplasm. Its subcellular location is the nucleoid. In terms of biological role, required for nucleoid occlusion (NO) phenomenon, which prevents Z-ring formation and cell division over the nucleoid. Acts as a DNA-associated cell division inhibitor that binds simultaneously chromosomal DNA and FtsZ, and disrupts the assembly of FtsZ polymers. SlmA-DNA-binding sequences (SBS) are dispersed on non-Ter regions of the chromosome, preventing FtsZ polymerization at these regions. The sequence is that of Nucleoid occlusion factor SlmA from Shewanella frigidimarina (strain NCIMB 400).